The chain runs to 114 residues: DNA polymerase epsilon subunit C (114 aa).

Residues 91 to 114 form a disordered region; it reads PDAVAPATGEEEQPKRRGRKPAQE.

In terms of assembly, heterotetramer. Consists of four subunits: POL2, DPB2, DPB3 and DPB4.

The protein resides in the nucleus. Functionally, as accessory component of the DNA polymerase epsilon (DNA polymerase II) participates in chromosomal DNA replication. In Yarrowia lipolytica (strain CLIB 122 / E 150) (Yeast), this protein is DNA polymerase epsilon subunit C (DPB3).